The primary structure comprises 1408 residues: ABC multidrug transporter MDR1 (1408 aa).

A compositionally biased stretch (polar residues) spans 79 to 88; that stretch reads IAASSDTLRN. The tract at residues 79 to 102 is disordered; it reads IAASSDTLRNSPLEKPISNAFSKS. The next 2 helical transmembrane spans lie at 147-167 and 223-243; these read FAAP…VAAG and LYLM…MFIW. The region spanning 157–464 is the ABC transmembrane type-1 1 domain; it reads VLGLVLAVAA…LAPELAAVTK (308 aa). A glycan (N-linked (GlcNAc...) asparagine) is linked at N244. Helical transmembrane passes span 296-316, 321-341, 408-428, and 436-456; these read KVAL…LAFV, LAGA…IMMT, IMFF…GILV, and GIVI…AMLA. Residues 499–744 form the ABC transporter 1 domain; the sequence is ISFENVKFHY…ENGPYAQLVN (246 aa). 534–541 serves as a coordination point for ATP; sequence GASGSGKS. An N-linked (GlcNAc...) asparagine glycan is attached at N606. 2 helical membrane-spanning segments follow: residues 838–858 and 882–902; these read IIAF…AILF and LWYF…SAGF. The ABC transmembrane type-1 2 domain occupies 838 to 1125; that stretch reads IIAFIAAICA…VFTFVPDASK (288 aa). The N-linked (GlcNAc...) asparagine glycan is linked to N934. The next 4 helical transmembrane spans lie at 952-972, 981-999, 1072-1092, and 1099-1119; these read GLFG…IGGC, LLAL…GGYI, GLTF…IIDA, and FYTV…VFTF. Residues N1127 and N1182 are each glycosylated (N-linked (GlcNAc...) asparagine). The region spanning 1162–1402 is the ABC transporter 2 domain; the sequence is VRIEGVHFRY…KGGYYELVQM (241 aa). 1197–1204 serves as a coordination point for ATP; it reads GPSGCGKS. Residue N1404 is glycosylated (N-linked (GlcNAc...) asparagine).

It belongs to the ABC transporter superfamily. ABCB family. Multidrug resistance exporter (TC 3.A.1.201) subfamily.

The protein localises to the cell membrane. The catalysed reaction is itraconazole(in) + ATP + H2O = itraconazole(out) + ADP + phosphate + H(+). It carries out the reaction voriconazole(in) + ATP + H2O = voriconazole(out) + ADP + phosphate + H(+). It catalyses the reaction fluconazole(in) + ATP + H2O = fluconazole(out) + ADP + phosphate + H(+). Functionally, pleiotropic ABC efflux transporter that confers resistance to structurally and functionally unrelated compounds including azoles such as fluconazole (FLC), itraconazole (ITC), posaconazole (POS), and voriconazole (VRC). The sequence is that of ABC multidrug transporter MDR1 from Cryptococcus neoformans var. grubii serotype A (strain H99 / ATCC 208821 / CBS 10515 / FGSC 9487) (Filobasidiella neoformans var. grubii).